A 213-amino-acid polypeptide reads, in one-letter code: ATP synthase peripheral stalk subunit OSCP, mitochondrial (213 aa).

The transit peptide at 1 to 23 directs the protein to the mitochondrion; the sequence is MATPAVSGLSRQVRCFSTSVVRP. The short motif at 5–23 is the SIFI-degron element; it reads AVSGLSRQVRCFSTSVVRP. Residues Lys-54, Lys-60, Lys-70, and Lys-73 each carry the N6-acetyllysine modification. Lys-90 carries the post-translational modification N6-succinyllysine. N6-acetyllysine; alternate is present on residues Lys-158 and Lys-162. N6-succinyllysine; alternate is present on residues Lys-158 and Lys-162. Residues Lys-172, Lys-176, and Lys-192 each carry the N6-acetyllysine modification. Lys-199 is modified (N6-succinyllysine).

It belongs to the ATPase delta chain family. As to quaternary structure, component of the ATP synthase complex composed at least of ATP5F1A/subunit alpha, ATP5F1B/subunit beta, ATP5MC1/subunit c (homooctomer), MT-ATP6/subunit a, MT-ATP8/subunit 8, ATP5ME/subunit e, ATP5MF/subunit f, ATP5MG/subunit g, ATP5MK/subunit k, ATP5MJ/subunit j, ATP5F1C/subunit gamma, ATP5F1D/subunit delta, ATP5F1E/subunit epsilon, ATP5PF/subunit F6, ATP5PB/subunit b, ATP5PD/subunit d, ATP5PO/subunit OSCP. ATP synthase complex consists of a soluble F(1) head domain (subunits alpha(3) and beta(3)) - the catalytic core - and a membrane F(0) domain - the membrane proton channel (subunits c, a, 8, e, f, g, k and j). These two domains are linked by a central stalk (subunits gamma, delta, and epsilon) rotating inside the F1 region and a stationary peripheral stalk (subunits F6, b, d, and OSCP). In terms of processing, acetylation at Lys-162 decreases ATP production. Deacetylated by SIRT3. In response to mitochondrial stress, the precursor protein is ubiquitinated by the SIFI complex in the cytoplasm before mitochondrial import, leading to its degradation. Within the SIFI complex, UBR4 initiates ubiquitin chain that are further elongated or branched by KCMF1.

The protein localises to the mitochondrion. It localises to the mitochondrion inner membrane. Its function is as follows. Subunit OSCP, of the mitochondrial membrane ATP synthase complex (F(1)F(0) ATP synthase or Complex V) that produces ATP from ADP in the presence of a proton gradient across the membrane which is generated by electron transport complexes of the respiratory chain. ATP synthase complex consist of a soluble F(1) head domain - the catalytic core - and a membrane F(1) domain - the membrane proton channel. These two domains are linked by a central stalk rotating inside the F(1) region and a stationary peripheral stalk. During catalysis, ATP synthesis in the catalytic domain of F(1) is coupled via a rotary mechanism of the central stalk subunits to proton translocation. In vivo, can only synthesize ATP although its ATP hydrolase activity can be activated artificially in vitro. Part of the complex F(0) domain. Part of the complex F(0) domain and the peripheric stalk, which acts as a stator to hold the catalytic alpha(3)beta(3) subcomplex and subunit a/ATP6 static relative to the rotary elements. The sequence is that of ATP synthase peripheral stalk subunit OSCP, mitochondrial from Pongo abelii (Sumatran orangutan).